A 156-amino-acid polypeptide reads, in one-letter code: Ribosomal RNA large subunit methyltransferase H (156 aa).

Residues Leu73, Gly104, and 123–128 (LSSLTL) contribute to the S-adenosyl-L-methionine site.

It belongs to the RNA methyltransferase RlmH family. As to quaternary structure, homodimer.

It is found in the cytoplasm. It catalyses the reaction pseudouridine(1915) in 23S rRNA + S-adenosyl-L-methionine = N(3)-methylpseudouridine(1915) in 23S rRNA + S-adenosyl-L-homocysteine + H(+). Specifically methylates the pseudouridine at position 1915 (m3Psi1915) in 23S rRNA. The sequence is that of Ribosomal RNA large subunit methyltransferase H from Bordetella avium (strain 197N).